The sequence spans 167 residues: Cofilin-2 (167 aa).

The ADF-H domain maps to 4-153 (GVTVNDEVIK…KDRCTLADKL (150 aa)). Positions 30 to 34 (KKRKK) match the Nuclear localization signal motif.

It belongs to the actin-binding proteins ADF family.

Its subcellular location is the nucleus matrix. It localises to the cytoplasm. The protein resides in the cytoskeleton. Its function is as follows. Controls reversibly actin polymerization and depolymerization in a pH-sensitive manner. It has the ability to bind G- and F-actin in a 1:1 ratio of cofilin to actin. It is the major component of intranuclear and cytoplasmic actin rods. The chain is Cofilin-2 (cfl2) from Xenopus tropicalis (Western clawed frog).